Reading from the N-terminus, the 306-residue chain is Pantothenate kinase (306 aa).

Position 91–98 (91–98 (GSVAVGKS)) interacts with ATP.

This sequence belongs to the prokaryotic pantothenate kinase family.

It localises to the cytoplasm. The catalysed reaction is (R)-pantothenate + ATP = (R)-4'-phosphopantothenate + ADP + H(+). Its pathway is cofactor biosynthesis; coenzyme A biosynthesis; CoA from (R)-pantothenate: step 1/5. This chain is Pantothenate kinase, found in Streptococcus mutans serotype c (strain ATCC 700610 / UA159).